A 216-amino-acid chain; its full sequence is SYKVSGGLHGVGVSVVNALSSKLELTIHRAGHIHQQEYKHGDPVYPLKVIGDIETTGTTVRFWPSAETFSQTIFNVDILARRLRELSFLNAGVRIVLRDERVALEHIFDLEVGLSEKSALDIAGLPGKLADCQEKDPALSELYLVEGDSAGGSAKQGRNRKMQAILPLKGKILNVERARFDKMISSQEVGTLITALGCGIGREEYNPDKLRYHKII.

The region spanning Ser140–Ile216 is the Toprim domain.

The protein belongs to the type II topoisomerase GyrB family. Heterotetramer, composed of two GyrA and two GyrB chains. In the heterotetramer, GyrA contains the active site tyrosine that forms a transient covalent intermediate with DNA, while GyrB binds cofactors and catalyzes ATP hydrolysis.

The protein resides in the cytoplasm. It carries out the reaction ATP-dependent breakage, passage and rejoining of double-stranded DNA.. Its function is as follows. A type II topoisomerase that negatively supercoils closed circular double-stranded (ds) DNA in an ATP-dependent manner to modulate DNA topology and maintain chromosomes in an underwound state. Negative supercoiling favors strand separation, and DNA replication, transcription, recombination and repair, all of which involve strand separation. Also able to catalyze the interconversion of other topological isomers of dsDNA rings, including catenanes and knotted rings. Type II topoisomerases break and join 2 DNA strands simultaneously in an ATP-dependent manner. This chain is DNA gyrase subunit B (gyrB), found in Acinetobacter bereziniae (Acinetobacter genomosp. 10).